We begin with the raw amino-acid sequence, 310 residues long: GMP synthase [glutamine-hydrolyzing] subunit B (310 aa).

Residues 1-187 (MSTSSYIDQI…LGLRTDLQPF (187 aa)) form the GMPS ATP-PPase domain. ATP is bound at residue 27-33 (SGGQDSS).

As to quaternary structure, heterodimer composed of a glutamine amidotransferase subunit (A) and a GMP-binding subunit (B).

The catalysed reaction is XMP + L-glutamine + ATP + H2O = GMP + L-glutamate + AMP + diphosphate + 2 H(+). The protein operates within purine metabolism; GMP biosynthesis; GMP from XMP (L-Gln route): step 1/1. Functionally, catalyzes the synthesis of GMP from XMP. The chain is GMP synthase [glutamine-hydrolyzing] subunit B (guaAB) from Thermoplasma acidophilum (strain ATCC 25905 / DSM 1728 / JCM 9062 / NBRC 15155 / AMRC-C165).